We begin with the raw amino-acid sequence, 912 residues long: Ubiquitin carboxyl-terminal hydrolase 20 (912 aa).

The segment at 6 to 111 adopts a UBP-type zinc-finger fold; the sequence is DLCPHLDSIG…GPAPKFSEQD (106 aa). 12 residues coordinate Zn(2+): C8, H10, C30, C33, C43, C48, C53, H60, H64, H70, C83, and C86. The segment at 101-120 is disordered; the sequence is PGPAPKFSEQDSPPPSHPLK. Residues S112, S132, and S134 each carry the phosphoserine modification. Residues 145-683 enclose the USP domain; that stretch reads TGMKNLGNSC…EAYVLFYRKS (539 aa). C154 acts as the Nucleophile in catalysis. Disordered stretches follow at residues 258–308 and 322–415; these read LTEA…GSQA and ISEK…ASPV. T259 bears the Phosphothreonine mark. The segment covering 260-280 has biased composition (basic and acidic residues); sequence EARDSDSSDTDEKREGDRSPS. The residue at position 306 (S306) is a Phosphoserine. Positions 322–333 are enriched in basic and acidic residues; sequence ISEKERMKDRKF. S369 bears the Phosphoserine mark. T378 bears the Phosphothreonine mark. S408 and S413 each carry phosphoserine. H641 (proton acceptor) is an active-site residue. 2 consecutive DUSP domains span residues 685 to 778 and 787 to 890; these read EEAV…LYVC and ALAK…RQSV.

Belongs to the peptidase C19 family. USP20/USP33 subfamily. Interacts with VHL, leading to its ubiquitination and subsequent degradation. Interacts with CCP110. Interacts with DIO2. Interacts with HIF1A. Interacts with ADRB2. Interacts with USP18. Ubiquitinated via a VHL-dependent pathway for proteasomal degradation.

It localises to the cytoplasm. The protein localises to the endoplasmic reticulum. It is found in the perinuclear region. The protein resides in the cytoskeleton. Its subcellular location is the microtubule organizing center. It localises to the centrosome. It catalyses the reaction Thiol-dependent hydrolysis of ester, thioester, amide, peptide and isopeptide bonds formed by the C-terminal Gly of ubiquitin (a 76-residue protein attached to proteins as an intracellular targeting signal).. Functionally, deubiquitinating enzyme that plays a role in many cellular processes including autophagy, cellular antiviral response or membrane protein biogenesis. Attenuates TLR4-mediated NF-kappa-B signaling by cooperating with beta-arrestin-2/ARRB2 and inhibiting TRAF6 autoubiquitination. Promotes cellular antiviral responses by deconjugating 'Lys-33' and 'Lys-48'-linked ubiquitination of STING1 leading to its stabilization. Plays an essential role in autophagy induction by regulating the ULK1 stability through deubiquitination of ULK1. Acts as a positive regulator for NF-kappa-B activation by TNF-alpha through deubiquitinating 'Lys-48'-linked polyubiquitination of SQSTM1, leading to its increased stability. Acts as a regulator of G-protein coupled receptor (GPCR) signaling by mediating the deubiquitination beta-2 adrenergic receptor (ADRB2). Plays a central role in ADRB2 recycling and resensitization after prolonged agonist stimulation by constitutively binding ADRB2, mediating deubiquitination of ADRB2 and inhibiting lysosomal trafficking of ADRB2. Upon dissociation, it is probably transferred to the translocated beta-arrestins, possibly leading to beta-arrestins deubiquitination and disengagement from ADRB2. This suggests the existence of a dynamic exchange between the ADRB2 and beta-arrestins. Deubiquitinates DIO2, thereby regulating thyroid hormone regulation. Deubiquitinates HIF1A, leading to stabilize HIF1A and enhance HIF1A-mediated activity. Deubiquitinates MCL1, a pivotal member of the anti-apoptotic Bcl-2 protein family to regulate its stability. Within the endoplasmic reticulum, participates with USP33 in the rescue of post-translationally targeted membrane proteins that are inappropriately ubiquitinated by the cytosolic protein quality control in the cytosol. This is Ubiquitin carboxyl-terminal hydrolase 20 (USP20) from Bos taurus (Bovine).